The following is a 191-amino-acid chain: Probable DNA-directed RNA polymerase subunit delta (191 aa).

Positions 14 to 83 (LSMIEVARAI…GENKWGLRSW (70 aa)) constitute an HTH HARE-type domain. Positions 119 to 191 (EDAIDYRDDD…EDEEDEEPVL (73 aa)) are disordered.

In terms of assembly, RNAP is composed of a core of 2 alpha, a beta and a beta' subunits. The core is associated with a delta subunit and one of several sigma factors.

In terms of biological role, participates in both the initiation and recycling phases of transcription. In the presence of the delta subunit, RNAP displays an increased specificity of transcription, a decreased affinity for nucleic acids, and an increased efficiency of RNA synthesis because of enhanced recycling. The polypeptide is Probable DNA-directed RNA polymerase subunit delta (Streptococcus pyogenes serotype M6 (strain ATCC BAA-946 / MGAS10394)).